A 293-amino-acid chain; its full sequence is Pyridoxal 5'-phosphate synthase subunit PdxS (293 aa).

D-ribose 5-phosphate is bound at residue aspartate 23. Residue lysine 80 is the Schiff-base intermediate with D-ribose 5-phosphate of the active site. Glycine 152 contributes to the D-ribose 5-phosphate binding site. Arginine 164 contacts D-glyceraldehyde 3-phosphate. Residues glycine 213 and 234 to 235 each bind D-ribose 5-phosphate; that span reads GS.

It belongs to the PdxS/SNZ family. As to quaternary structure, in the presence of PdxT, forms a dodecamer of heterodimers.

The catalysed reaction is aldehydo-D-ribose 5-phosphate + D-glyceraldehyde 3-phosphate + L-glutamine = pyridoxal 5'-phosphate + L-glutamate + phosphate + 3 H2O + H(+). It participates in cofactor biosynthesis; pyridoxal 5'-phosphate biosynthesis. Catalyzes the formation of pyridoxal 5'-phosphate from ribose 5-phosphate (RBP), glyceraldehyde 3-phosphate (G3P) and ammonia. The ammonia is provided by the PdxT subunit. Can also use ribulose 5-phosphate and dihydroxyacetone phosphate as substrates, resulting from enzyme-catalyzed isomerization of RBP and G3P, respectively. This Thermus thermophilus (strain ATCC 27634 / DSM 579 / HB8) protein is Pyridoxal 5'-phosphate synthase subunit PdxS.